We begin with the raw amino-acid sequence, 566 residues long: Transcriptional regulatory protein XylR (566 aa).

Residues 235-464 (GIGHSPAYKR…LENALERGVI (230 aa)) form the Sigma-54 factor interaction domain. ATP-binding positions include 263-270 (GETGVGKE) and 326-335 (ANGGTIFLDE). Positions 534 to 553 (ISQAARLLGLTRPAMAYRLK) form a DNA-binding region, H-T-H motif.

Functionally, regulatory protein of the TOL plasmid xyl operons. In the presence of m-xylene or m-methylbenzyl alcohol XylR activates both the xylCMABN operon and the regulatory gene xylS; xylS itself activates the xylXYZLTEGFJQKIH operon. XylR interacts with sigma-54. This chain is Transcriptional regulatory protein XylR (xylR), found in Pseudomonas putida (Arthrobacter siderocapsulatus).